Reading from the N-terminus, the 262-residue chain is Acyl-[acyl-carrier-protein]--UDP-N-acetylglucosamine O-acyltransferase (262 aa).

Belongs to the transferase hexapeptide repeat family. LpxA subfamily. As to quaternary structure, homotrimer.

The protein localises to the cytoplasm. The enzyme catalyses a (3R)-hydroxyacyl-[ACP] + UDP-N-acetyl-alpha-D-glucosamine = a UDP-3-O-[(3R)-3-hydroxyacyl]-N-acetyl-alpha-D-glucosamine + holo-[ACP]. It functions in the pathway glycolipid biosynthesis; lipid IV(A) biosynthesis; lipid IV(A) from (3R)-3-hydroxytetradecanoyl-[acyl-carrier-protein] and UDP-N-acetyl-alpha-D-glucosamine: step 1/6. Its function is as follows. Involved in the biosynthesis of lipid A, a phosphorylated glycolipid that anchors the lipopolysaccharide to the outer membrane of the cell. This Salmonella paratyphi B (strain ATCC BAA-1250 / SPB7) protein is Acyl-[acyl-carrier-protein]--UDP-N-acetylglucosamine O-acyltransferase.